The following is a 358-amino-acid chain: 2'-5'-oligoadenylate synthase 1A (358 aa).

The tract at residues 14–61 (DKFIEVYLLPNTSFRDDVKSAINVLCDFLKERCFRDTVHPVRVSKVVK) is interaction with dsRNA. ATP is bound at residue Ser64. Positions 76, 78, and 149 each coordinate Mg(2+). Residues 201–211 (QRPTKLKSLIR) form an interaction with dsRNA region. Residues Arg211, Lys214, and Gln231 each contribute to the ATP site.

The protein belongs to the 2-5A synthase family. Monomer. Homotetramer. Interacts with OAS1D. Requires Mg(2+) as cofactor.

Its subcellular location is the cytoplasm. The protein resides in the mitochondrion. It is found in the nucleus. The protein localises to the microsome. It localises to the endoplasmic reticulum. The catalysed reaction is 3 ATP = 5'-triphosphoadenylyl-(2'-&gt;5')-adenylyl-(2'-&gt;5')-adenosine + 2 diphosphate. Produced as a latent enzyme which is activated by dsRNA generated during the course of viral infection. The dsRNA activator must be at least 15 nucleotides long, and no modification of the 2'-hydroxyl group is tolerated. ssRNA or dsDNA do not act as activators. Interferon-induced, dsRNA-activated antiviral enzyme which plays a critical role in cellular innate antiviral response. In addition, it may also play a role in other cellular processes such as apoptosis, cell growth, differentiation and gene regulation. Synthesizes higher oligomers of 2'-5'-oligoadenylates (2-5A) from ATP which then bind to the inactive monomeric form of ribonuclease L (RNase L) leading to its dimerization and subsequent activation. Activation of RNase L leads to degradation of cellular as well as viral RNA, resulting in the inhibition of protein synthesis, thus terminating viral replication. Can mediate the antiviral effect via the classical RNase L-dependent pathway or an alternative antiviral pathway independent of RNase L. The sequence is that of 2'-5'-oligoadenylate synthase 1A (Oas1a) from Rattus norvegicus (Rat).